The sequence spans 156 residues: Transcriptional repressor NrdR (156 aa).

A zinc finger spans residues 3–34 (CPKCNSTQSKVVDSRHADELNAIRRRRECENC). The ATP-cone domain maps to 49 to 139 (LIVVKKDGTR…VYKEFKDVDQ (91 aa)).

This sequence belongs to the NrdR family. The cofactor is Zn(2+).

Negatively regulates transcription of bacterial ribonucleotide reductase nrd genes and operons by binding to NrdR-boxes. The polypeptide is Transcriptional repressor NrdR (Staphylococcus aureus (strain NCTC 8325 / PS 47)).